The primary structure comprises 100 residues: Large ribosomal subunit protein uL23 (100 aa).

Belongs to the universal ribosomal protein uL23 family. In terms of assembly, part of the 50S ribosomal subunit. Contacts protein L29, and trigger factor when it is bound to the ribosome.

Its function is as follows. One of the early assembly proteins it binds 23S rRNA. One of the proteins that surrounds the polypeptide exit tunnel on the outside of the ribosome. Forms the main docking site for trigger factor binding to the ribosome. The protein is Large ribosomal subunit protein uL23 of Prochlorococcus marinus (strain AS9601).